The sequence spans 253 residues: Transcription factor ORG2 (253 aa).

The region spanning 71-123 (VKKLNHNASERDRRKKINTLFSSLRSCLPASDQSKKLSIPETVSKSLKYIPEL) is the bHLH domain.

Homodimer. As to expression, roots.

It localises to the nucleus. This Arabidopsis thaliana (Mouse-ear cress) protein is Transcription factor ORG2 (ORG2).